The following is a 185-amino-acid chain: Elongation factor P (185 aa).

This sequence belongs to the elongation factor P family.

The protein localises to the cytoplasm. Its pathway is protein biosynthesis; polypeptide chain elongation. Involved in peptide bond synthesis. Stimulates efficient translation and peptide-bond synthesis on native or reconstituted 70S ribosomes in vitro. Probably functions indirectly by altering the affinity of the ribosome for aminoacyl-tRNA, thus increasing their reactivity as acceptors for peptidyl transferase. The chain is Elongation factor P from Staphylococcus epidermidis (strain ATCC 35984 / DSM 28319 / BCRC 17069 / CCUG 31568 / BM 3577 / RP62A).